The chain runs to 451 residues: D-aminoacyl-tRNA deacylase (451 aa).

The tract at residues 410 to 437 (RTADIPEGPKFGKLASGESVEIDGEEID) is disordered.

It belongs to the DtdA deacylase family. As to quaternary structure, monomer. Zn(2+) is required as a cofactor.

The enzyme catalyses a D-aminoacyl-tRNA + H2O = a tRNA + a D-alpha-amino acid + H(+). The catalysed reaction is glycyl-tRNA(Ala) + H2O = tRNA(Ala) + glycine + H(+). In terms of biological role, D-aminoacyl-tRNA deacylase with broad substrate specificity. By recycling D-aminoacyl-tRNA to D-amino acids and free tRNA molecules, this enzyme counteracts the toxicity associated with the formation of D-aminoacyl-tRNA entities in vivo. The chain is D-aminoacyl-tRNA deacylase from Haloarcula marismortui (strain ATCC 43049 / DSM 3752 / JCM 8966 / VKM B-1809) (Halobacterium marismortui).